The primary structure comprises 204 residues: Inositol diphosphatase DSP2 (204 aa).

Residues 1 to 27 (MQLEISPRQRSQQQKEEEGEHQQRAGE) form a disordered region. Residues 13 to 27 (QQKEEEGEHQQRAGE) are compositionally biased toward basic and acidic residues. Positions 51 to 203 (NFAEVNDGIF…SSLMHLTASQ (153 aa)) constitute a Tyrosine-protein phosphatase domain. Residues 107-119 (FGIDGSKELLVNI) are WPD loop important for active site topology. 1D-myo-inositol hexakisphosphate contacts are provided by Asn-118, Ile-119, and Lys-123. The active-site Phosphocysteine intermediate is the Cys-143.

This sequence belongs to the protein-tyrosine phosphatase family. Atypical dual-specificity phosphatase Siw14-like subfamily. As to expression, expressed in roots and young panicles.

The protein resides in the cytoplasm. It localises to the nucleus. It catalyses the reaction 5-diphospho-1D-myo-inositol 1,2,3,4,6-pentakisphosphate + H2O = 1D-myo-inositol hexakisphosphate + phosphate + H(+). The enzyme catalyses 1,5-bis(diphospho)-1D-myo-inositol 2,3,4,6-tetrakisphosphate + H2O = 1-diphospho-1D-myo-inositol 2,3,4,5,6-pentakisphosphate + phosphate + 2 H(+). It carries out the reaction 3,5-bis(diphospho)-1D-myo-inositol 1,2,4,6-tetrakisphosphate + H2O = 3-diphospho-1D-myo-inositol 1,2,4,5,6-pentakisphosphate + phosphate + 2 H(+). The catalysed reaction is 6-diphospho-1D-myo-inositol pentakisphosphate + H2O = 1D-myo-inositol hexakisphosphate + phosphate + H(+). Functionally, cleaves the beta-phosphate at the 5-position of soluble inositol pyrophosphates. Has highest activity on 5-diphosphoinositol 1,2,3,4,6-pentakisphosphate (5-InsP(7)). Acts as a negative regulator of defense responses against the fungal pathogen Magnaporthe oryzae. This chain is Inositol diphosphatase DSP2, found in Oryza sativa subsp. japonica (Rice).